Here is an 81-residue protein sequence, read N- to C-terminus: EC protein III (81 aa).

This sequence belongs to the metallothionein superfamily. Type 15 family.

Binds 5 molecules of zinc. May have a role in Zn(2+) homeostasis during embryogenesis. This is EC protein III from Triticum aestivum (Wheat).